Consider the following 212-residue polypeptide: Thymidylate kinase (212 aa).

11-18 (GPEGAGKT) lines the ATP pocket.

Belongs to the thymidylate kinase family.

The enzyme catalyses dTMP + ATP = dTDP + ADP. Functionally, phosphorylation of dTMP to form dTDP in both de novo and salvage pathways of dTTP synthesis. The sequence is that of Thymidylate kinase from Streptococcus pneumoniae serotype 2 (strain D39 / NCTC 7466).